A 231-amino-acid chain; its full sequence is GFP-like fluorescent chromoprotein FP538 (231 aa).

Phe65 is modified (phenylalanine amide; atypical). Positions 66–68 (KYG) form a cross-link, 2-tetrahydro-2-pyridyl-5-imidazolinone (Lys-Gly). Tyr67 is modified (2,3-didehydrotyrosine).

The protein belongs to the GFP family. Homotetramer. Contains a chromophore consisting of modified amino acid residues. The chromophore is formed by autocatalytic backbone condensation between Xaa-N and Gly-(N+2), and oxidation of Tyr-(N+1) to didehydrotyrosine. In addition, the residue N lysine undergoes cyclization. The alpha-amino nitrogen is replaced by the epsilon-amino nitrogen, the peptide chain is broken, residue N-1 is released as an amide, and a double bond is formed between the alpha-carbon and the nitrogen so that a tetrahydropyridine ring results. Maturation of the chromophore requires nothing other than molecular oxygen. Tentacle and oral disk.

Its function is as follows. Pigment protein that is yellow in color. The chain is GFP-like fluorescent chromoprotein FP538 from Zoanthus sp. (Green polyp).